We begin with the raw amino-acid sequence, 86 residues long: uncharacterized protein (86 aa).

The protein to C.jejuni CJ0253.

This is an uncharacterized protein from Helicobacter pylori (strain J99 / ATCC 700824) (Campylobacter pylori J99).